Reading from the N-terminus, the 1476-residue chain is Coiled-coil domain-containing protein 88B (1476 aa).

The stretch at 253-481 (SHHLALQLAN…RGLLQVLQGQ (229 aa)) forms a coiled coil. 4 disordered regions span residues 427-451 (QRSL…SLQD), 509-706 (VAFD…EGAL), 825-866 (RRQW…ERRE), and 1323-1476 (LMRP…SLSQ). Position 436 is a phosphoserine (Ser-436). Positions 572 to 586 (SDWSPQESGSPVETQ) are enriched in polar residues. Position 596 is a phosphoserine (Ser-596). 3 stretches are compositionally biased toward basic and acidic residues: residues 678–690 (EARE…EGTV), 825–834 (RRQWEREGSR), and 842–866 (AEER…ERRE). A coiled-coil region spans residues 720–1303 (LASGVAEQEA…KIMDQYRVLE (584 aa)). Residues Ser-1348 and Ser-1379 each carry the phosphoserine modification. Residues 1448-1469 (LQEHETDANREGPEVQEPEKRP) are compositionally biased toward basic and acidic residues.

This sequence belongs to the CCDC88 family. As to quaternary structure, homodimer. Interacts with DOCK8. Interacts (via C-terminus) with intact microtubules. Interacts with dynein-dynactin motor complex. Interacts (via C-terminus) with HSPA5. Expressed in endothelium (at protein level). Expressed in NK cells (at protein level).

Its subcellular location is the membrane. The protein resides in the cytoplasm. It localises to the cytoskeleton. It is found in the microtubule organizing center. The protein localises to the endoplasmic reticulum. Its subcellular location is the golgi apparatus. Functionally, acts as a positive regulator of T-cell maturation and inflammatory function. Required for several functions of T-cells, in both the CD4(+) and the CD8(+) compartments and this includes expression of cell surface markers of activation, proliferation, and cytokine production in response to specific or non-specific stimulation. Enhances NK cell cytotoxicity by positively regulating polarization of microtubule-organizing center (MTOC) to cytotoxic synapse, lytic granule transport along microtubules, and dynein-mediated clustering to MTOC. Interacts with HSPA5 and stabilizes the interaction between HSPA5 and ERN1, leading to suppression of ERN1-induced JNK activation and endoplasmic reticulum stress-induced apoptosis. The polypeptide is Coiled-coil domain-containing protein 88B (CCDC88B) (Homo sapiens (Human)).